The sequence spans 117 residues: Small ribosomal subunit protein bS6 (117 aa).

The segment at 96–117 (HAEGPSVQMQKRDERDNRRERR) is disordered. A compositionally biased stretch (basic and acidic residues) spans 105–117 (QKRDERDNRRERR).

The protein belongs to the bacterial ribosomal protein bS6 family.

Binds together with bS18 to 16S ribosomal RNA. This is Small ribosomal subunit protein bS6 from Ruegeria sp. (strain TM1040) (Silicibacter sp.).